The sequence spans 385 residues: 1-deoxy-D-xylulose 5-phosphate reductoisomerase (385 aa).

Ser10, Gly11, Ser12, Ile13, Gly36, Asn38, and Asn124 together coordinate NADPH. 1-deoxy-D-xylulose 5-phosphate is bound at residue Lys125. Glu126 is an NADPH binding site. Residue Asp150 participates in Mn(2+) binding. 1-deoxy-D-xylulose 5-phosphate contacts are provided by Ser151, Glu152, Ser176, and His198. Glu152 lines the Mn(2+) pocket. Gly204 contacts NADPH. 1-deoxy-D-xylulose 5-phosphate-binding residues include Ser211, Asn216, Lys217, and Glu220. Position 220 (Glu220) interacts with Mn(2+).

This sequence belongs to the DXR family. Mg(2+) is required as a cofactor. Mn(2+) serves as cofactor.

The catalysed reaction is 2-C-methyl-D-erythritol 4-phosphate + NADP(+) = 1-deoxy-D-xylulose 5-phosphate + NADPH + H(+). The protein operates within isoprenoid biosynthesis; isopentenyl diphosphate biosynthesis via DXP pathway; isopentenyl diphosphate from 1-deoxy-D-xylulose 5-phosphate: step 1/6. Functionally, catalyzes the NADPH-dependent rearrangement and reduction of 1-deoxy-D-xylulose-5-phosphate (DXP) to 2-C-methyl-D-erythritol 4-phosphate (MEP). This chain is 1-deoxy-D-xylulose 5-phosphate reductoisomerase, found in Endomicrobium trichonymphae.